Consider the following 199-residue polypeptide: ATP-dependent Clp protease proteolytic subunit (199 aa).

Serine 103 (nucleophile) is an active-site residue. Residue histidine 128 is part of the active site.

This sequence belongs to the peptidase S14 family. As to quaternary structure, fourteen ClpP subunits assemble into 2 heptameric rings which stack back to back to give a disk-like structure with a central cavity, resembling the structure of eukaryotic proteasomes.

It is found in the cytoplasm. The catalysed reaction is Hydrolysis of proteins to small peptides in the presence of ATP and magnesium. alpha-casein is the usual test substrate. In the absence of ATP, only oligopeptides shorter than five residues are hydrolyzed (such as succinyl-Leu-Tyr-|-NHMec, and Leu-Tyr-Leu-|-Tyr-Trp, in which cleavage of the -Tyr-|-Leu- and -Tyr-|-Trp bonds also occurs).. Functionally, cleaves peptides in various proteins in a process that requires ATP hydrolysis. Has a chymotrypsin-like activity. Plays a major role in the degradation of misfolded proteins. The polypeptide is ATP-dependent Clp protease proteolytic subunit (Photobacterium profundum (strain SS9)).